The following is a 159-amino-acid chain: Small ribosomal subunit protein uS15 (159 aa).

A compositionally biased stretch (basic residues) spans 1-16 (MNKRKEKGKSHSKRPV). Residues 1-22 (MNKRKEKGKSHSKRPVRNTPPR) are disordered.

The protein belongs to the universal ribosomal protein uS15 family. In terms of assembly, part of the 30S ribosomal subunit.

In Ignicoccus hospitalis (strain KIN4/I / DSM 18386 / JCM 14125), this protein is Small ribosomal subunit protein uS15.